A 451-amino-acid chain; its full sequence is MRIILAGTGSAVGKTTIATGIMKALSEEYNVQPFKVGPDYIDPTYHTLATGNTSRNLDSFFMKEGQVRDAFLKAMEKKDIAIIEGVRGLYEGIDSINDIGSTASIAKSLNAPVILIINSRSLVKSAAALVLGFKALDPEINIAGVILNKVKNNAHYLKTKKSIEEITDVEVIGGIIRDDSISIEQRHLGLVPAVERENSLSFIELWSNIIKESIDLDRLVEIAKEAPKLTSPREDIWNKLNKQKVKIGVAYDEVFNFYYKENIESLEANSCKVEYFSPLKDESLPDVDGLYIGGGYPELFSKELSQNTVLLKQIKQFHMENRPIFAECGGLMYLMNSIHEDKQVGVYPYNSILTDKVQALKYTIAEVKKDNIISKKGEKFNGHEFHYSKVLVDNSNIKHDLAFNILRGKGSYNNQDGFMEKNTLASYVHTHVAAMPNFGGNLAISAREVGG.

The region spanning 246-437 (KIGVAYDEVF…VHTHVAAMPN (192 aa)) is the GATase cobBQ-type domain. The active-site Nucleophile is C328.

This sequence belongs to the CobB/CbiA family. Requires Mg(2+) as cofactor.

It carries out the reaction cob(II)yrinate + 2 L-glutamine + 2 ATP + 2 H2O = cob(II)yrinate a,c diamide + 2 L-glutamate + 2 ADP + 2 phosphate + 2 H(+). The enzyme catalyses Ni-sirohydrochlorin + 2 L-glutamine + 2 ATP + 2 H2O = Ni-sirohydrochlorin a,c-diamide + 2 L-glutamate + 2 ADP + 2 phosphate + 2 H(+). It functions in the pathway cofactor biosynthesis; adenosylcobalamin biosynthesis; cob(II)yrinate a,c-diamide from sirohydrochlorin (anaerobic route): step 10/10. Catalyzes the ATP-dependent amidation of the two carboxylate groups at positions a and c of cobyrinate, using either L-glutamine or ammonia as the nitrogen source. Involved in the biosynthesis of the unique nickel-containing tetrapyrrole coenzyme F430, the prosthetic group of methyl-coenzyme M reductase (MCR), which plays a key role in methanogenesis and anaerobic methane oxidation. Catalyzes the ATP-dependent amidation of the two carboxylate groups at positions a and c of Ni-sirohydrochlorin, using L-glutamine or ammonia as the nitrogen source. The protein is Cobyrinate a,c-diamide synthase of Methanobrevibacter smithii (strain ATCC 35061 / DSM 861 / OCM 144 / PS).